The chain runs to 396 residues: Acetate kinase (396 aa).

Asn8 provides a ligand contact to Mg(2+). An ATP-binding site is contributed by Lys15. Arg89 contacts substrate. Catalysis depends on Asp146, which acts as the Proton donor/acceptor. ATP contacts are provided by residues 206–210 (HIGNG), 283–285 (DMR), and 331–335 (GIGEN). Glu383 is a Mg(2+) binding site.

Belongs to the acetokinase family. As to quaternary structure, homodimer. It depends on Mg(2+) as a cofactor. Mn(2+) is required as a cofactor.

The protein localises to the cytoplasm. It carries out the reaction acetate + ATP = acetyl phosphate + ADP. It functions in the pathway metabolic intermediate biosynthesis; acetyl-CoA biosynthesis; acetyl-CoA from acetate: step 1/2. In terms of biological role, catalyzes the formation of acetyl phosphate from acetate and ATP. Can also catalyze the reverse reaction. The sequence is that of Acetate kinase from Streptococcus gordonii (strain Challis / ATCC 35105 / BCRC 15272 / CH1 / DL1 / V288).